Consider the following 424-residue polypeptide: Tyrosine--tRNA ligase (424 aa).

Residue Tyr-37 participates in L-tyrosine binding. Positions 42-51 (PTADSLHLGH) match the 'HIGH' region motif. Lys-144 is modified (N6-acetyllysine). L-tyrosine contacts are provided by Tyr-175 and Gln-179. Residues 235–239 (KFGKT) carry the 'KMSKS' region motif. Lys-238 is a binding site for ATP. One can recognise an S4 RNA-binding domain in the interval 357–414 (ADLMQALVDSELQPSRGQARKTIASNAITINGEKQSDPEYFFKEEDRLFGRFTLLRRG).

It belongs to the class-I aminoacyl-tRNA synthetase family. TyrS type 1 subfamily. In terms of assembly, homodimer.

It is found in the cytoplasm. It carries out the reaction tRNA(Tyr) + L-tyrosine + ATP = L-tyrosyl-tRNA(Tyr) + AMP + diphosphate + H(+). Catalyzes the attachment of tyrosine to tRNA(Tyr) in a two-step reaction: tyrosine is first activated by ATP to form Tyr-AMP and then transferred to the acceptor end of tRNA(Tyr). The sequence is that of Tyrosine--tRNA ligase from Escherichia coli O8 (strain IAI1).